A 275-amino-acid chain; its full sequence is Diaminopimelate epimerase (275 aa).

Substrate contacts are provided by asparagine 20 and asparagine 63. The active-site Proton donor is cysteine 72. Substrate contacts are provided by residues glycine 73–asparagine 74, asparagine 179, and glutamate 197–arginine 198. Catalysis depends on cysteine 207, which acts as the Proton acceptor. Residue glycine 208–threonine 209 participates in substrate binding.

It belongs to the diaminopimelate epimerase family. Homodimer.

It localises to the cytoplasm. It carries out the reaction (2S,6S)-2,6-diaminopimelate = meso-2,6-diaminopimelate. It functions in the pathway amino-acid biosynthesis; L-lysine biosynthesis via DAP pathway; DL-2,6-diaminopimelate from LL-2,6-diaminopimelate: step 1/1. Catalyzes the stereoinversion of LL-2,6-diaminopimelate (L,L-DAP) to meso-diaminopimelate (meso-DAP), a precursor of L-lysine and an essential component of the bacterial peptidoglycan. The chain is Diaminopimelate epimerase from Chlamydia trachomatis serovar L2 (strain ATCC VR-902B / DSM 19102 / 434/Bu).